The sequence spans 550 residues: Cytochrome P450 monooxygenase hasH (550 aa).

A helical transmembrane segment spans residues 39 to 59 (IGVLASIVVLVTVVIGPKAVI). Residue Cys-493 participates in heme binding.

The protein belongs to the cytochrome P450 family. Heme is required as a cofactor.

The protein localises to the membrane. The protein operates within secondary metabolite biosynthesis. Functionally, cytochrome P450 monooxygenase; part of the gene cluster that mediates the biosynthesis of hexadehydro-astechrome (HAS), a tryptophan-derived iron(III)-complex that acts as a virulence factor in infected mice. Within the pathway, hasH, with the O-methyltransferase hasC and the FAD-linked oxidoreductase hasG, convert the hasE-prenylated Trp-Ala dipeptide into an O-methylated diketopiperazine that is then released from the hasD NRPS. The HAS biosynthesis begins with the synthesis of a tethered Trp-Ala dipeptide by the NRPS hasD. The 7-dimethylallyltryptophan synthase hasE then catalyzes the prenylation of the hasD-tethered tryptophan or the resulting tethered Trp-Ala dipeptide at the C-7 position of the indole moiety. HAS biosynthesis continues via tethered intermediates with the succesive action of the cytochrome P450 monooxygenase hasH, the O-methyltransferase hasC, and the FAD-linked oxidoreductase hasG. The resulting O-methylated diketopiperazine is then released from hasD. Finally, three O-methylated diketopiperazine molecules assemble in a trimeric complex with Fe(III) to produce hexadehydro-astechrome. In Aspergillus fumigatus (strain CBS 144.89 / FGSC A1163 / CEA10) (Neosartorya fumigata), this protein is Cytochrome P450 monooxygenase hasH.